The chain runs to 481 residues: Protein JASON (481 aa).

The disordered stretch occupies residues 226-250; sequence ECDLDQSNSSNSSENGSSRKPEMGG. Over residues 232-241 the composition is skewed to low complexity; that stretch reads SNSSNSSENG.

Required for normal spindle orientation at male meiosis II and normal formation of tetrad of microspores. Acts as a positive regulator of PS1 in male sporogenesis. Not involved in female meiosis. The sequence is that of Protein JASON from Arabidopsis thaliana (Mouse-ear cress).